We begin with the raw amino-acid sequence, 197 residues long: Holliday junction branch migration complex subunit RuvA (197 aa).

The interval 1 to 64 (MYDYIKGIYK…DDSINLYGFF (64 aa)) is domain I. The interval 65 to 143 (TEEERDMFNL…NDDIISDIDD (79 aa)) is domain II. The flexible linker stretch occupies residues 144-154 (LDSISNFQLHS). The segment at 154–197 (SAEALEALMSLGYSQKESEKALKNVDKENSLEDIIKACLKYLMG) is domain III.

Belongs to the RuvA family. Homotetramer. Forms an RuvA(8)-RuvB(12)-Holliday junction (HJ) complex. HJ DNA is sandwiched between 2 RuvA tetramers; dsDNA enters through RuvA and exits via RuvB. An RuvB hexamer assembles on each DNA strand where it exits the tetramer. Each RuvB hexamer is contacted by two RuvA subunits (via domain III) on 2 adjacent RuvB subunits; this complex drives branch migration. In the full resolvosome a probable DNA-RuvA(4)-RuvB(12)-RuvC(2) complex forms which resolves the HJ.

The protein resides in the cytoplasm. Functionally, the RuvA-RuvB-RuvC complex processes Holliday junction (HJ) DNA during genetic recombination and DNA repair, while the RuvA-RuvB complex plays an important role in the rescue of blocked DNA replication forks via replication fork reversal (RFR). RuvA specifically binds to HJ cruciform DNA, conferring on it an open structure. The RuvB hexamer acts as an ATP-dependent pump, pulling dsDNA into and through the RuvAB complex. HJ branch migration allows RuvC to scan DNA until it finds its consensus sequence, where it cleaves and resolves the cruciform DNA. The chain is Holliday junction branch migration complex subunit RuvA from Clostridium tetani (strain Massachusetts / E88).